The chain runs to 865 residues: Lactose regulatory protein LAC9 (865 aa).

Residues 1–15 (MGSRASNSPSFSSKA) show a composition bias toward polar residues. Residues 1–87 (MGSRASNSPS…NNNNNNNKKS (87 aa)) are disordered. Over residues 22 to 34 (EYKKNAVKKETIR) the composition is skewed to basic and acidic residues. Positions 67-85 (SNGNKNDSNANNNNNNNNK) are enriched in low complexity. Residues C95, C98, C105, C112, C115, and C122 each coordinate Zn(2+). The zn(2)-C6 fungal-type DNA-binding region spans 95–122 (CDACRKKKWKCSKTVPTCTNCLKYNLDC). The segment at 818 to 840 (LQSSTTQMRPPTTSGWPDTNNFL) is disordered.

It localises to the nucleus. Positive regulatory protein, that controls induction of the lactose-galactose regulation of Kluyveromyces lactis. This Kluyveromyces lactis (strain ATCC 8585 / CBS 2359 / DSM 70799 / NBRC 1267 / NRRL Y-1140 / WM37) (Yeast) protein is Lactose regulatory protein LAC9 (LAC9).